Here is a 54-residue protein sequence, read N- to C-terminus: Beta-2-microglobulin (54 aa).

Residues 3–41 form the Ig-like C1-type domain; sequence KVELSDLSFNKDWSFYLLAHREFVPTATDKYACRVSHIT.

This sequence belongs to the beta-2-microglobulin family. Heterodimer of an alpha chain and a beta chain. Beta-2-microglobulin is the beta-chain of major histocompatibility complex class I molecules.

It is found in the secreted. Functionally, component of the class I major histocompatibility complex (MHC). Involved in the presentation of peptide antigens to the immune system. The polypeptide is Beta-2-microglobulin (B2M) (Mesocricetus auratus (Golden hamster)).